The sequence spans 35 residues: Photosystem II reaction center protein Psb30 (35 aa).

Residues 7 to 27 (VFVQLALLALIVLAGPAVILL) form a helical membrane-spanning segment.

Belongs to the Psb30/Ycf12 family. As to quaternary structure, PSII is composed of 1 copy each of membrane proteins PsbA, PsbB, PsbC, PsbD, PsbE, PsbF, PsbH, PsbI, PsbJ, PsbK, PsbL, PsbM, PsbT, PsbX, PsbY, PsbZ, Psb30/Ycf12, peripheral proteins PsbO, CyanoQ (PsbQ), PsbU, PsbV and a large number of cofactors. It forms dimeric complexes.

Its subcellular location is the cellular thylakoid membrane. Functionally, a core subunit of photosystem II (PSII), probably helps stabilize the reaction center. The protein is Photosystem II reaction center protein Psb30 of Synechococcus sp. (strain JA-2-3B'a(2-13)) (Cyanobacteria bacterium Yellowstone B-Prime).